The sequence spans 477 residues: Xylose isomerase (477 aa).

Residue His-142 is part of the active site. 7 residues coordinate Mn(2+): Glu-273, Glu-309, His-312, Asp-337, Asp-348, Asp-350, and Asp-380.

The protein belongs to the xylose isomerase family. Mn(2+) serves as cofactor.

It carries out the reaction alpha-D-xylose = alpha-D-xylulofuranose. The sequence is that of Xylose isomerase (XYLA) from Arabidopsis thaliana (Mouse-ear cress).